The following is a 175-amino-acid chain: Large ribosomal subunit protein uL10 (175 aa).

The protein belongs to the universal ribosomal protein uL10 family. Part of the ribosomal stalk of the 50S ribosomal subunit. The N-terminus interacts with L11 and the large rRNA to form the base of the stalk. The C-terminus forms an elongated spine to which L12 dimers bind in a sequential fashion forming a multimeric L10(L12)X complex.

Its function is as follows. Forms part of the ribosomal stalk, playing a central role in the interaction of the ribosome with GTP-bound translation factors. The sequence is that of Large ribosomal subunit protein uL10 (rplJ) from Xylella fastidiosa (strain 9a5c).